Consider the following 132-residue polypeptide: Small ribosomal subunit protein uS8 (132 aa).

It belongs to the universal ribosomal protein uS8 family. Part of the 30S ribosomal subunit. Contacts proteins S5 and S12.

Its function is as follows. One of the primary rRNA binding proteins, it binds directly to 16S rRNA central domain where it helps coordinate assembly of the platform of the 30S subunit. The polypeptide is Small ribosomal subunit protein uS8 (Renibacterium salmoninarum (strain ATCC 33209 / DSM 20767 / JCM 11484 / NBRC 15589 / NCIMB 2235)).